Consider the following 229-residue polypeptide: Flagellar calcium-binding protein TB-1.7G (229 aa).

The interval 1–25 is disordered; the sequence is GSKNASNPKDGAASKGGKDGKTTAD. A compositionally biased stretch (basic and acidic residues) spans 16 to 25; that stretch reads GGKDGKTTAD. EF-hand domains follow at residues 44-79, 80-115, 126-161, and 163-198; these read ESKS…ILKL, DEFT…LVEF, YDIF…LKEW, and VDIT…KKLQ. The Ca(2+) site is built by aspartate 57, asparagine 59, threonine 61, lysine 63, and glutamate 68. Ca(2+) is bound by residues aspartate 139, aspartate 141, serine 143, glutamate 150, aspartate 176, asparagine 178, serine 180, and glutamate 187. Residues 202-229 form a disordered region; the sequence is DPDDEENGANEGDGANAGDGVPAAEGSA. Over residues 210-221 the composition is skewed to low complexity; sequence ANEGDGANAGDG.

The protein belongs to the calflagin family.

It is found in the cell projection. The protein resides in the cilium. The protein localises to the flagellum. In terms of biological role, may contribute to the rapid motility of the trypanosomes, playing a role either in flagellar structure or in calcium metabolism. Could alternate between a GDP-bound inactive form to a calcium/GTP-bound active form. The sequence is that of Flagellar calcium-binding protein TB-1.7G from Trypanosoma brucei brucei.